We begin with the raw amino-acid sequence, 1573 residues long: Pentafunctional AROM polypeptide 1 (1573 aa).

The segment at 1–380 is 3-dehydroquinate synthase; it reads MAEPTKISIL…YEPKASVVSN (380 aa). NAD(+) contacts are provided by residues 44 to 46, 81 to 84, 112 to 114, and aspartate 117; these read DTN, ENSK, and GGV. Arginine 128 is a 7-phospho-2-dehydro-3-deoxy-D-arabino-heptonate binding site. 137–138 provides a ligand contact to NAD(+); that stretch reads TT. 7-phospho-2-dehydro-3-deoxy-D-arabino-heptonate contacts are provided by aspartate 144 and lysine 150. Position 159 (lysine 159) interacts with NAD(+). Asparagine 160 contacts 7-phospho-2-dehydro-3-deoxy-D-arabino-heptonate. Residues 177–180 and asparagine 188 each bind NAD(+); that span reads FIDT. Glutamate 192 lines the Zn(2+) pocket. Residues 192 to 195 and lysine 246 contribute to the 7-phospho-2-dehydro-3-deoxy-D-arabino-heptonate site; that span reads EVIK. Glutamate 256 acts as the Proton acceptor; for 3-dehydroquinate synthase activity in catalysis. 7-phospho-2-dehydro-3-deoxy-D-arabino-heptonate-binding positions include 260–264 and histidine 267; that span reads RNLLN. Residue histidine 267 coordinates Zn(2+). Residue histidine 271 is the Proton acceptor; for 3-dehydroquinate synthase activity of the active site. Positions 283 and 352 each coordinate 7-phospho-2-dehydro-3-deoxy-D-arabino-heptonate. Histidine 283 is a binding site for Zn(2+). An EPSP synthase region spans residues 393-838; the sequence is VIPGVPKDLN…WDALKQKFGV (446 aa). Catalysis depends on cysteine 820, which acts as the For EPSP synthase activity. A shikimate kinase region spans residues 859–1051; it reads DASIVIIGMR…RRKRLSFFMS (193 aa). ATP is bound at residue 866 to 873; sequence GMRGAGKT. The tract at residues 1052 to 1273 is 3-dehydroquinase; the sequence is LTLTDLRDSG…AAPGQLSAAE (222 aa). Residue histidine 1175 is the Proton acceptor; for 3-dehydroquinate dehydratase activity of the active site. The active-site Schiff-base intermediate with substrate; for 3-dehydroquinate dehydratase activity is lysine 1203. Positions 1286-1573 are shikimate dehydrogenase; that stretch reads AKKFAIFGKP…NAVLGTDETK (288 aa).

It in the N-terminal section; belongs to the sugar phosphate cyclases superfamily. Dehydroquinate synthase family. This sequence in the 2nd section; belongs to the EPSP synthase family. In the 3rd section; belongs to the shikimate kinase family. The protein in the 4th section; belongs to the type-I 3-dehydroquinase family. It in the C-terminal section; belongs to the shikimate dehydrogenase family. Homodimer. It depends on Zn(2+) as a cofactor.

It is found in the cytoplasm. The enzyme catalyses 7-phospho-2-dehydro-3-deoxy-D-arabino-heptonate = 3-dehydroquinate + phosphate. It catalyses the reaction 3-dehydroquinate = 3-dehydroshikimate + H2O. The catalysed reaction is shikimate + NADP(+) = 3-dehydroshikimate + NADPH + H(+). It carries out the reaction shikimate + ATP = 3-phosphoshikimate + ADP + H(+). The enzyme catalyses 3-phosphoshikimate + phosphoenolpyruvate = 5-O-(1-carboxyvinyl)-3-phosphoshikimate + phosphate. It participates in metabolic intermediate biosynthesis; chorismate biosynthesis; chorismate from D-erythrose 4-phosphate and phosphoenolpyruvate: step 2/7. The protein operates within metabolic intermediate biosynthesis; chorismate biosynthesis; chorismate from D-erythrose 4-phosphate and phosphoenolpyruvate: step 3/7. Its pathway is metabolic intermediate biosynthesis; chorismate biosynthesis; chorismate from D-erythrose 4-phosphate and phosphoenolpyruvate: step 4/7. It functions in the pathway metabolic intermediate biosynthesis; chorismate biosynthesis; chorismate from D-erythrose 4-phosphate and phosphoenolpyruvate: step 5/7. It participates in metabolic intermediate biosynthesis; chorismate biosynthesis; chorismate from D-erythrose 4-phosphate and phosphoenolpyruvate: step 6/7. Its function is as follows. The AROM polypeptide catalyzes 5 consecutive enzymatic reactions in prechorismate polyaromatic amino acid biosynthesis. This is Pentafunctional AROM polypeptide 1 from Talaromyces marneffei (strain ATCC 18224 / CBS 334.59 / QM 7333) (Penicillium marneffei).